A 617-amino-acid chain; its full sequence is Dihydroxy-acid dehydratase (617 aa).

A Mg(2+)-binding site is contributed by Asp81. Cys122 provides a ligand contact to [2Fe-2S] cluster. Residues Asp123 and Lys124 each coordinate Mg(2+). Lys124 is subject to N6-carboxylysine. Cys195 is a binding site for [2Fe-2S] cluster. Glu492 is a Mg(2+) binding site. Ser518 acts as the Proton acceptor in catalysis.

It belongs to the IlvD/Edd family. As to quaternary structure, homodimer. The cofactor is [2Fe-2S] cluster. It depends on Mg(2+) as a cofactor.

The enzyme catalyses (2R)-2,3-dihydroxy-3-methylbutanoate = 3-methyl-2-oxobutanoate + H2O. It carries out the reaction (2R,3R)-2,3-dihydroxy-3-methylpentanoate = (S)-3-methyl-2-oxopentanoate + H2O. The protein operates within amino-acid biosynthesis; L-isoleucine biosynthesis; L-isoleucine from 2-oxobutanoate: step 3/4. It participates in amino-acid biosynthesis; L-valine biosynthesis; L-valine from pyruvate: step 3/4. Functionally, functions in the biosynthesis of branched-chain amino acids. Catalyzes the dehydration of (2R,3R)-2,3-dihydroxy-3-methylpentanoate (2,3-dihydroxy-3-methylvalerate) into 2-oxo-3-methylpentanoate (2-oxo-3-methylvalerate) and of (2R)-2,3-dihydroxy-3-methylbutanoate (2,3-dihydroxyisovalerate) into 2-oxo-3-methylbutanoate (2-oxoisovalerate), the penultimate precursor to L-isoleucine and L-valine, respectively. The protein is Dihydroxy-acid dehydratase of Azorhizobium caulinodans (strain ATCC 43989 / DSM 5975 / JCM 20966 / LMG 6465 / NBRC 14845 / NCIMB 13405 / ORS 571).